The following is a 62-amino-acid chain: Photosystem II reaction center X protein (62 aa).

The chain crosses the membrane as a helical span at residues 26 to 46; that stretch reads IASFFAAALLIVIPAATFLIF.

Belongs to the PsbX family. Type 2 subfamily. In terms of assembly, PSII consists of a core antenna complex that captures photons, and an electron transfer chain that converts photonic excitation into a charge separation. PSII forms dimeric complexes.

The protein resides in the cellular thylakoid membrane. Functionally, involved in the binding and/or turnover of quinones at the Q(B) site of Photosystem II. This chain is Photosystem II reaction center X protein, found in Prochlorococcus marinus (strain MIT 9515).